The following is a 317-amino-acid chain: Pinoresinol reductase 2 (317 aa).

Residues T18, S20, L21, R41, K50, S90, G91, R95, N98, and S121 each coordinate NADP(+). A (-)-pinoresinol-binding site is contributed by M125. NADP(+) contacts are provided by K144 and F166. The active-site Proton acceptor is the K144. G178 lines the (-)-pinoresinol pocket.

Belongs to the NmrA-type oxidoreductase family. Isoflavone reductase subfamily. In terms of assembly, forms homodimers. Expressed in roots. Detected in stems.

It carries out the reaction (-)-lariciresinol + NADP(+) = (-)-pinoresinol + NADPH + H(+). Functionally, reductase involved in lignan biosynthesis. Unlike conventional pinoresinol reductases that can reduce both pinoresinol and lariciresinol, PRR2 shows a strict substrate selectivity for (-)-pinoresinol. No activity with (+)-pinoresinol or lariciresinol. Abstracts the 4R-hydride from the NADPH cofactor during catalysis. The chain is Pinoresinol reductase 2 from Arabidopsis thaliana (Mouse-ear cress).